A 244-amino-acid polypeptide reads, in one-letter code: MKGKLSIALMLSVCFSASATDSVHWGYEGNGDPAHWGKLSPDFSLCETGKNQSPINIRQALNAQHDPLQLAFQSGTQQIINNGHTIQVNVSPGNTLLLDNETFTLQQFHFHAPSENEIDGKQFPLEGHFVYKNADGALTVIALMFQEGAANPQLATAWQQIPARVDQAEDVRTPVAIQALLPTSLNYYRFSGSLTTPPCSEGIRWLVLDHPVTASAEQISQFSSVMHHANNRPIQPLNGRIIIH.

Residues 1–19 (MKGKLSIALMLSVCFSASA) form the signal peptide. One can recognise an Alpha-carbonic anhydrase domain in the interval 23-244 (VHWGYEGNGD…QPLNGRIIIH (222 aa)). Cys-46 and Cys-199 are disulfide-bonded. His-84 functions as the Proton acceptor in the catalytic mechanism. Zn(2+) is bound by residues His-109, His-111, and His-128. Substrate is bound at residue 195 to 196 (TT).

This sequence belongs to the alpha-carbonic anhydrase family. Requires Zn(2+) as cofactor.

It is found in the periplasm. The catalysed reaction is hydrogencarbonate + H(+) = CO2 + H2O. Functionally, reversible hydration of carbon dioxide. In Pectobacterium carotovorum (Erwinia carotovora), this protein is Carbonic anhydrase (cah).